Consider the following 177-residue polypeptide: Large ribosomal subunit protein uL5 (177 aa).

This sequence belongs to the universal ribosomal protein uL5 family. Part of the 50S ribosomal subunit. Interacts with protein L18 and the 5S rRNA, and probably with tRNAs. Forms a bridge to the 30S subunit in the 70S ribosome.

Its function is as follows. This is 1 of 5 proteins that mediates the attachment of the 5S rRNA onto the large ribosomal subunit, stabilizing the orientation of adjacent RNA domains. Forms part of the central protuberance. Modeling places the A and P site tRNAs in close proximity to this protein; the 5S rRNA and some of its associated proteins might help stabilize positioning of ribosome-bound tRNAs. In the 70S ribosome it is thought to contact protein S13 of the 30S subunit (bridge B1b), connecting the 2 subunits; this bridge is implicated in subunit movement. This Haloarcula marismortui (strain ATCC 43049 / DSM 3752 / JCM 8966 / VKM B-1809) (Halobacterium marismortui) protein is Large ribosomal subunit protein uL5 (rpl5).